The following is a 195-amino-acid chain: Probable peroxygenase 4 (195 aa).

The region spanning 14-49 is the EF-hand domain; the sequence is EEDNFLQRHVAFFDRNKDGIVYPSETFQGFRAIGCG. Position 22 (histidine 22) interacts with heme. The Ca(2+) site is built by aspartate 27, asparagine 29, aspartate 31, and glutamate 38. Positions 70-79 match the Proline-knot motif; the sequence is PGKGFSIWFP. Serine 177 is subject to Phosphoserine.

This sequence belongs to the caleosin family. In terms of assembly, homodimer. It depends on heme b as a cofactor. The cofactor is Ca(2+). Expressed in roots, leaves, stems, shoots, flowers and germinated seeds. Barely detected in dry seeds prior to germination. Preferentially expressed in vascular bundles and in guard cells.

It is found in the lipid droplet. It carries out the reaction RH + ROOH = ROH + ROH.. Functionally, calcium-binding peroxygenase involved in the degradation of storage lipid in oil bodies. May be involved in the interaction between oil bodies and vacuoles during seed germination. Acts as a negative regulator of abscisic acid responses in non-seed tissues. This is Probable peroxygenase 4 (PXG4) from Arabidopsis thaliana (Mouse-ear cress).